The chain runs to 671 residues: Oviduct-specific glycoprotein (671 aa).

Positions 1–21 are cleaved as a signal peptide; that stretch reads MGRLLLWVGLVLLMKPNDGTA. One can recognise a GH18 domain in the interval 22–385; the sequence is YKLVCYFTNW…HILNELLVRA (364 aa). Cys-26 and Cys-51 form a disulfide bridge. Chitin is bound by residues 71–72, 98–101, Tyr-142, 211–214, and Trp-355; these read LQ, GGWN, and LSYD. N-linked (GlcNAc...) asparagine glycosylation is present at Asn-402. A run of 8 repeats spans residues 490–504, 505–519, 520–534, 535–549, 550–564, 565–579, 580–594, and 595–609. The 8 X 15 AA tandem repeats stretch occupies residues 490-609; the sequence is TGMTVTVQTQ…GSQSVTPPGM (120 aa). Asn-511, Asn-526, Asn-541, Asn-556, Asn-571, and Asn-586 each carry an N-linked (GlcNAc...) asparagine glycan.

This sequence belongs to the glycosyl hydrolase 18 family. In terms of processing, highly O-glycosylated and also N-glycosylated. As to expression, oviduct.

The protein localises to the cytoplasmic vesicle. The protein resides in the secretory vesicle. Binds to oocyte zona pellucida in vivo. May play a role in the fertilization process and/or early embryonic development. Might act as a protective secretion influencing the first steps of the reproductive process necessary for the normal triggering of fertilization and early embryonic development. The polypeptide is Oviduct-specific glycoprotein (OVGP1) (Mesocricetus auratus (Golden hamster)).